We begin with the raw amino-acid sequence, 402 residues long: uncharacterized protein (402 aa).

The tract at residues 332–402 is disordered; sequence MFSSSSSSSE…PEPPPGKPGR (71 aa). The segment covering 370–379 has biased composition (polar residues); it reads SETTSLQQYS. The span at 393-402 shows a compositional bias: pro residues; the sequence is PEPPPGKPGR.

This is an uncharacterized protein from Mus musculus (Mouse).